The primary structure comprises 700 residues: MESRLPKPSGLKKPQMPIKTVLPTDRIRAGLGGGAAGAGAFNVNANQTYCGNLLPPLSRDLNNLPQVLERRGGGARAASPEPMKLGHRAKLRRSRSACDINELRGNKRTAAAPSLPSIPSKVSRLGGALTVSSQRLVRPAAPSSITATAVKRPPVTRPAPRAAGGAAAKKPAGTGAAASSGAAAAAPKRIAPYDFKARFHDLLEKHKVLKTKYEKQTEDMGELESMPQQLEETQNKLIETESSLKNTQSDNECLQRQVKQHTAKIETITSTLGRTKEELSELQAIHEKVKTEHAALSTEVVHLRQRTEELLRCNEQQAAELETCKEQLFQSNMERKELHNTVMDLRGNIRVFCRIRPPLESEENRMCCTWTYHDESTVELQSIDAQAKSKMGQQIFSFDQVFHPLSSQSDIFEMVSPLIQSALDGYNICIFAYGQTGSGKTYTMDGVPESVGVIPRTVDLLFDSIRGYRNLGWEYEIKATFLEIYNEVLYDLLSNEQKDMEIRMAKNNKNDIYVSNITEETVLDPNHLRHLMHTAKMNRATASTAGNERSSRSHAVTKLELIGRHAEKQEISVGSINLVDLAGSESPKTSTRMTETKNINRSLSELTNVILALLQKQDHIPYRNSKLTHLLMPSLGGNSKTLMFINVSPFQDCFQESVKSLRFAASVNSCKMTKAKRNRYLNNSVANSSTQSNNSGSFDK.

Phosphoserine is present on residues Ser-94 and Ser-96. The disordered stretch occupies residues 141–185; that stretch reads APSSITATAVKRPPVTRPAPRAAGGAAAKKPAGTGAAASSGAAAA. Over residues 149–185 the composition is skewed to low complexity; it reads AVKRPPVTRPAPRAAGGAAAKKPAGTGAAASSGAAAA. Residues 196–346 are a coiled coil; that stretch reads KARFHDLLEK…ELHNTVMDLR (151 aa). The region spanning 348–670 is the Kinesin motor domain; the sequence is NIRVFCRIRP…LRFAASVNSC (323 aa). 434 to 441 provides a ligand contact to ATP; the sequence is GQTGSGKT. A required for minus-end directionality region spans residues 664 to 668; sequence AASVN. The interval 681 to 700 is disordered; it reads LNNSVANSSTQSNNSGSFDK.

It belongs to the TRAFAC class myosin-kinesin ATPase superfamily. Kinesin family. NCD subfamily.

Its subcellular location is the cytoplasm. The protein resides in the cytoskeleton. The catalysed reaction is ATP + H2O = ADP + phosphate + H(+). Its function is as follows. Minus-end-directed microtubule-based motor protein. Has ATPase activity. Required for normal chromosomal segregation in meiosis in females, and in early mitotic divisions of the embryo. In Drosophila melanogaster (Fruit fly), this protein is Protein claret segregational (ncd).